A 187-amino-acid polypeptide reads, in one-letter code: UPF0301 protein CT0663 (187 aa).

The protein belongs to the UPF0301 (AlgH) family.

The chain is UPF0301 protein CT0663 from Chlorobaculum tepidum (strain ATCC 49652 / DSM 12025 / NBRC 103806 / TLS) (Chlorobium tepidum).